Consider the following 380-residue polypeptide: Beta sliding clamp (380 aa).

It belongs to the beta sliding clamp family. Forms a ring-shaped head-to-tail homodimer around DNA which binds and tethers DNA polymerases and other proteins to the DNA. The DNA replisome complex has a single clamp-loading complex (3 tau and 1 each of delta, delta', psi and chi subunits) which binds 3 Pol III cores (1 core on the leading strand and 2 on the lagging strand) each with a beta sliding clamp dimer. Additional proteins in the replisome are other copies of gamma, psi and chi, Ssb, DNA helicase and RNA primase.

The protein localises to the cytoplasm. Its function is as follows. Confers DNA tethering and processivity to DNA polymerases and other proteins. Acts as a clamp, forming a ring around DNA (a reaction catalyzed by the clamp-loading complex) which diffuses in an ATP-independent manner freely and bidirectionally along dsDNA. Initially characterized for its ability to contact the catalytic subunit of DNA polymerase III (Pol III), a complex, multichain enzyme responsible for most of the replicative synthesis in bacteria; Pol III exhibits 3'-5' exonuclease proofreading activity. The beta chain is required for initiation of replication as well as for processivity of DNA replication. The polypeptide is Beta sliding clamp (dnaN) (Mycoplasma genitalium (strain ATCC 33530 / DSM 19775 / NCTC 10195 / G37) (Mycoplasmoides genitalium)).